Consider the following 102-residue polypeptide: Small ribosomal subunit protein uS10 (102 aa).

It belongs to the universal ribosomal protein uS10 family. As to quaternary structure, part of the 30S ribosomal subunit.

In terms of biological role, involved in the binding of tRNA to the ribosomes. This chain is Small ribosomal subunit protein uS10, found in Symbiobacterium thermophilum (strain DSM 24528 / JCM 14929 / IAM 14863 / T).